A 278-amino-acid chain; its full sequence is Serine protease 57 (278 aa).

The N-terminal stretch at 1–31 is a signal peptide; the sequence is MVPGTGGGRDCLTLVVATALTQLLWLPGCCG. Residues 34–263 form the Peptidase S1 domain; sequence IVGGHEVKPH…FVSWIWDVVR (230 aa). Residues Cys59 and Cys75 are joined by a disulfide bond. Catalysis depends on charge relay system residues His74 and Asp122. N-linked (GlcNAc...) asparagine glycosylation is present at Asn129. Intrachain disulfides connect Cys157-Cys224, Cys188-Cys202, and Cys214-Cys239. Residue Ser218 is the Charge relay system of the active site.

The protein belongs to the peptidase S1 family. After cleavage of the signal peptide, the N-terminus is probably further processed by CTSC. Processing by CTSC is probably required for accumulation in cytoplasmic granules; in the absence of CTSC the protein does not accumulate. Post-translationally, N-glycosylated.

It is found in the cytoplasmic granule lumen. It localises to the secreted. Its function is as follows. Serine protease that cleaves preferentially after Arg residues. Can also cleave after citrulline (deimidated arginine) and methylarginine residues. The protein is Serine protease 57 (Prss57) of Rattus norvegicus (Rat).